The chain runs to 463 residues: Probable multidrug resistance protein YoeA (463 aa).

The next 12 membrane-spanning stretches (helical) occupy residues 24–44 (LFLV…LVGM), 56–76 (VAAV…TIGI), 106–126 (FTFL…LDIL), 143–163 (ARIL…TTFL), 177–197 (IVST…MFGF), 202–222 (IYGS…VLMV), 256–276 (VPAS…ISFV), 293–313 (VASY…IFAA), 330–350 (VGIW…YVFS), 370–390 (LLMI…ISAT), 397–417 (VLWP…PVAF), and 427–447 (ILGV…LIYG).

Belongs to the multi antimicrobial extrusion (MATE) (TC 2.A.66.1) family.

The protein localises to the cell membrane. In Bacillus subtilis (strain 168), this protein is Probable multidrug resistance protein YoeA (yoeA).